The primary structure comprises 270 residues: SPbeta prophage-derived DNA ligase-like protein LigB (270 aa).

Lys25 (N6-AMP-lysine intermediate) is an active-site residue.

It belongs to the ATP-dependent DNA ligase family.

This is SPbeta prophage-derived DNA ligase-like protein LigB (ligB) from Bacillus subtilis (strain 168).